Reading from the N-terminus, the 332-residue chain is Holliday junction branch migration complex subunit RuvB (332 aa).

Residues M1 to Y181 are large ATPase domain (RuvB-L). ATP contacts are provided by residues L20, R21, G62, K65, T66, T67, E128–F130, R171, Y181, and R218. T66 contributes to the Mg(2+) binding site. A small ATPAse domain (RuvB-S) region spans residues Q182–D252. The segment at R255–T332 is head domain (RuvB-H). Positions 291, 310, 312, and 315 each coordinate DNA.

This sequence belongs to the RuvB family. Homohexamer. Forms an RuvA(8)-RuvB(12)-Holliday junction (HJ) complex. HJ DNA is sandwiched between 2 RuvA tetramers; dsDNA enters through RuvA and exits via RuvB. An RuvB hexamer assembles on each DNA strand where it exits the tetramer. Each RuvB hexamer is contacted by two RuvA subunits (via domain III) on 2 adjacent RuvB subunits; this complex drives branch migration. In the full resolvosome a probable DNA-RuvA(4)-RuvB(12)-RuvC(2) complex forms which resolves the HJ.

It is found in the cytoplasm. It carries out the reaction ATP + H2O = ADP + phosphate + H(+). In terms of biological role, the RuvA-RuvB-RuvC complex processes Holliday junction (HJ) DNA during genetic recombination and DNA repair, while the RuvA-RuvB complex plays an important role in the rescue of blocked DNA replication forks via replication fork reversal (RFR). RuvA specifically binds to HJ cruciform DNA, conferring on it an open structure. The RuvB hexamer acts as an ATP-dependent pump, pulling dsDNA into and through the RuvAB complex. RuvB forms 2 homohexamers on either side of HJ DNA bound by 1 or 2 RuvA tetramers; 4 subunits per hexamer contact DNA at a time. Coordinated motions by a converter formed by DNA-disengaged RuvB subunits stimulates ATP hydrolysis and nucleotide exchange. Immobilization of the converter enables RuvB to convert the ATP-contained energy into a lever motion, pulling 2 nucleotides of DNA out of the RuvA tetramer per ATP hydrolyzed, thus driving DNA branch migration. The RuvB motors rotate together with the DNA substrate, which together with the progressing nucleotide cycle form the mechanistic basis for DNA recombination by continuous HJ branch migration. Branch migration allows RuvC to scan DNA until it finds its consensus sequence, where it cleaves and resolves cruciform DNA. This is Holliday junction branch migration complex subunit RuvB from Streptococcus pyogenes serotype M1.